The chain runs to 397 residues: S-adenosylmethionine synthase (397 aa).

H17 contacts ATP. D19 contributes to the Mg(2+) binding site. Residue E45 coordinates K(+). Residues E58 and Q101 each contribute to the L-methionine site. The interval 101–111 is flexible loop; sequence QSPDIAQGVDK. Residues 176–178, 243–244, D252, 258–259, and K279 each bind ATP; these read DGK, RF, and RK. D252 is a binding site for L-methionine. An L-methionine-binding site is contributed by K283.

This sequence belongs to the AdoMet synthase family. As to quaternary structure, homotetramer; dimer of dimers. The cofactor is Mg(2+). K(+) serves as cofactor.

It is found in the cytoplasm. It catalyses the reaction L-methionine + ATP + H2O = S-adenosyl-L-methionine + phosphate + diphosphate. It participates in amino-acid biosynthesis; S-adenosyl-L-methionine biosynthesis; S-adenosyl-L-methionine from L-methionine: step 1/1. Catalyzes the formation of S-adenosylmethionine (AdoMet) from methionine and ATP. The overall synthetic reaction is composed of two sequential steps, AdoMet formation and the subsequent tripolyphosphate hydrolysis which occurs prior to release of AdoMet from the enzyme. In Staphylococcus aureus (strain MRSA252), this protein is S-adenosylmethionine synthase.